We begin with the raw amino-acid sequence, 436 residues long: GTPase Der (436 aa).

EngA-type G domains lie at 4–167 and 176–351; these read PIVA…DEET and IRLS…ENHK. Residues 10 to 17, 57 to 61, 119 to 122, 182 to 189, 229 to 233, and 294 to 297 contribute to the GTP site; these read GRPNVGKS, DTGGI, NKVD, DTAGM, and NKWD. One can recognise a KH-like domain in the interval 352–436; sequence KRVQSSTLNE…PIHIIPRRRN (85 aa).

It belongs to the TRAFAC class TrmE-Era-EngA-EngB-Septin-like GTPase superfamily. EngA (Der) GTPase family. As to quaternary structure, associates with the 50S ribosomal subunit.

Its function is as follows. GTPase that plays an essential role in the late steps of ribosome biogenesis. The sequence is that of GTPase Der from Staphylococcus haemolyticus (strain JCSC1435).